We begin with the raw amino-acid sequence, 513 residues long: Mesoderm induction early response protein 1 (513 aa).

The span at Met1–Thr16 shows a compositional bias: low complexity. Residues Met1–Tyr174 are disordered. Composition is skewed to basic and acidic residues over residues Ser17 to Glu36 and Glu46 to Asp63. The span at Gln82 to Asp107 shows a compositional bias: acidic residues. Residues Gln131 to Pro146 are compositionally biased toward polar residues. The segment at Tyr157–Glu261 is interaction with HDAC1. Over residues Ser162–Tyr174 the composition is skewed to acidic residues. Residues Lys182–Val280 form the ELM2 domain. The region spanning Glu285–Arg337 is the SANT domain. The segment at Glu368–Asp513 is disordered. Composition is skewed to basic and acidic residues over residues Pro416 to Gly425 and Ser463 to Pro476. Polar residues predominate over residues Asn483–Asn500.

The protein resides in the nucleus. Transcriptional repressor regulating the expression of a number of genes. Probably functions through recruitment of histone deacetylases involved in chromatin silencing. The protein is Mesoderm induction early response protein 1 (MIER1) of Gallus gallus (Chicken).